We begin with the raw amino-acid sequence, 134 residues long: Phosphoribosyl-ATP pyrophosphatase 2 (134 aa).

This sequence belongs to the PRA-PH family.

It localises to the cytoplasm. The enzyme catalyses 1-(5-phospho-beta-D-ribosyl)-ATP + H2O = 1-(5-phospho-beta-D-ribosyl)-5'-AMP + diphosphate + H(+). It participates in amino-acid biosynthesis; L-histidine biosynthesis; L-histidine from 5-phospho-alpha-D-ribose 1-diphosphate: step 2/9. In Bradyrhizobium diazoefficiens (strain JCM 10833 / BCRC 13528 / IAM 13628 / NBRC 14792 / USDA 110), this protein is Phosphoribosyl-ATP pyrophosphatase 2 (hisE2).